Reading from the N-terminus, the 129-residue chain is Fluoride-specific ion channel FluC (129 aa).

4 helical membrane passes run 4 to 24 (VLIV…LGEW), 30 to 50 (GFPT…GWLL), 63 to 83 (WSLL…TFSV), and 95 to 115 (IVAS…AYIG). The Na(+) site is built by Gly-73 and Thr-76.

Belongs to the fluoride channel Fluc/FEX (TC 1.A.43) family.

The protein resides in the cell membrane. The catalysed reaction is fluoride(in) = fluoride(out). Na(+) is not transported, but it plays an essential structural role and its presence is essential for fluoride channel function. Fluoride-specific ion channel. Important for reducing fluoride concentration in the cell, thus reducing its toxicity. This Oceanobacillus iheyensis (strain DSM 14371 / CIP 107618 / JCM 11309 / KCTC 3954 / HTE831) protein is Fluoride-specific ion channel FluC.